The primary structure comprises 388 residues: Chorismate synthase (388 aa).

NADP(+) is bound by residues arginine 39 and arginine 45. Residues arginine 130–serine 132, asparagine 251–alanine 252, glycine 296, lysine 311–threonine 315, and arginine 337 each bind FMN.

The protein belongs to the chorismate synthase family. Homotetramer. The cofactor is FMNH2.

The enzyme catalyses 5-O-(1-carboxyvinyl)-3-phosphoshikimate = chorismate + phosphate. The protein operates within metabolic intermediate biosynthesis; chorismate biosynthesis; chorismate from D-erythrose 4-phosphate and phosphoenolpyruvate: step 7/7. Its function is as follows. Catalyzes the anti-1,4-elimination of the C-3 phosphate and the C-6 proR hydrogen from 5-enolpyruvylshikimate-3-phosphate (EPSP) to yield chorismate, which is the branch point compound that serves as the starting substrate for the three terminal pathways of aromatic amino acid biosynthesis. This reaction introduces a second double bond into the aromatic ring system. The chain is Chorismate synthase from Lactococcus lactis subsp. cremoris (strain MG1363).